Consider the following 111-residue polypeptide: MIWRGRSTYRPRPRRSVPPPELIGPMLEPGDEEPQQEEPPTESRDPAPGQEREEDQGAAETQVPDLEADLQELSQSKTGGECGNGPDDQGKILPKSEQFKMPEGGDRQPQV.

Residues 1–111 are disordered; sequence MIWRGRSTYR…PEGGDRQPQV (111 aa). Positions 29 to 40 are enriched in acidic residues; sequence PGDEEPQQEEPP. Basic and acidic residues predominate over residues 97–111; sequence EQFKMPEGGDRQPQV.

Belongs to the GAGE family.

This is X antigen family member 3 (XAGE3) from Homo sapiens (Human).